A 254-amino-acid chain; its full sequence is 3-deoxy-manno-octulosonate cytidylyltransferase (254 aa).

Belongs to the KdsB family.

It localises to the cytoplasm. The catalysed reaction is 3-deoxy-alpha-D-manno-oct-2-ulosonate + CTP = CMP-3-deoxy-beta-D-manno-octulosonate + diphosphate. The protein operates within nucleotide-sugar biosynthesis; CMP-3-deoxy-D-manno-octulosonate biosynthesis; CMP-3-deoxy-D-manno-octulosonate from 3-deoxy-D-manno-octulosonate and CTP: step 1/1. It participates in bacterial outer membrane biogenesis; lipopolysaccharide biosynthesis. Its function is as follows. Activates KDO (a required 8-carbon sugar) for incorporation into bacterial lipopolysaccharide in Gram-negative bacteria. This Porphyromonas gingivalis (strain ATCC BAA-308 / W83) protein is 3-deoxy-manno-octulosonate cytidylyltransferase.